A 68-amino-acid chain; its full sequence is DNA-directed RNA polymerase subunit omega (68 aa).

This sequence belongs to the RNA polymerase subunit omega family. The RNAP catalytic core consists of 2 alpha, 1 beta, 1 beta' and 1 omega subunit. When a sigma factor is associated with the core the holoenzyme is formed, which can initiate transcription.

The catalysed reaction is RNA(n) + a ribonucleoside 5'-triphosphate = RNA(n+1) + diphosphate. Promotes RNA polymerase assembly. Latches the N- and C-terminal regions of the beta' subunit thereby facilitating its interaction with the beta and alpha subunits. The protein is DNA-directed RNA polymerase subunit omega of Listeria monocytogenes serotype 4b (strain CLIP80459).